The sequence spans 117 residues: uncharacterized protein (117 aa).

Over residues 1–12 (MAQNSVSLSAGD) the composition is skewed to polar residues. Disordered stretches follow at residues 1–30 (MAQN…NPSA) and 43–87 (VTRL…SPYP).

This is an uncharacterized protein from Mus musculus (Mouse).